The sequence spans 420 residues: Gamma-glutamyl phosphate reductase (420 aa).

Belongs to the gamma-glutamyl phosphate reductase family.

It is found in the cytoplasm. It catalyses the reaction L-glutamate 5-semialdehyde + phosphate + NADP(+) = L-glutamyl 5-phosphate + NADPH + H(+). It functions in the pathway amino-acid biosynthesis; L-proline biosynthesis; L-glutamate 5-semialdehyde from L-glutamate: step 2/2. Its function is as follows. Catalyzes the NADPH-dependent reduction of L-glutamate 5-phosphate into L-glutamate 5-semialdehyde and phosphate. The product spontaneously undergoes cyclization to form 1-pyrroline-5-carboxylate. The protein is Gamma-glutamyl phosphate reductase of Neisseria gonorrhoeae (strain ATCC 700825 / FA 1090).